The chain runs to 233 residues: Large ribosomal subunit protein uL1 (233 aa).

The protein belongs to the universal ribosomal protein uL1 family. In terms of assembly, part of the 50S ribosomal subunit.

Functionally, binds directly to 23S rRNA. The L1 stalk is quite mobile in the ribosome, and is involved in E site tRNA release. In terms of biological role, protein L1 is also a translational repressor protein, it controls the translation of the L11 operon by binding to its mRNA. This is Large ribosomal subunit protein uL1 from Shewanella amazonensis (strain ATCC BAA-1098 / SB2B).